A 253-amino-acid chain; its full sequence is Kallikrein-7 (253 aa).

Residues 1 to 22 (MARSLLLPLQILLLSLALETAG) form the signal peptide. Positions 23–29 (EEAQGDK) are cleaved as a propeptide — activation peptide. The region spanning 30 to 250 (IIDGAPCARG…FTKWINDTMK (221 aa)) is the Peptidase S1 domain. 6 disulfides stabilise this stretch: C36–C165, C55–C71, C137–C239, C144–C211, C176–C190, and C201–C226. Active-site charge relay system residues include H70 and D112. Catalysis depends on S205, which acts as the Charge relay system. N-linked (GlcNAc...) asparagine glycosylation occurs at N246.

This sequence belongs to the peptidase S1 family. Kallikrein subfamily. In terms of tissue distribution, abundantly expressed in the skin and is expressed by keratinocytes in the epidermis. Also expressed in the brain, mammary gland, cerebellum, spinal cord and kidney. Lower levels in salivary glands, uterus, thymus, thyroid, placenta, trachea and testis. Up-regulated in ovarian carcinoma, especially late-stage serous carcinoma, compared with normal ovaries and benign adenomas (at protein level).

It localises to the secreted. The enzyme catalyses Cleavage of proteins with aromatic side chains in the P1 position.. Inhibited by Zn2+ and Cu2+ at low micromolar concentrations. Inhibited by SERPINA12. May catalyze the degradation of intercellular cohesive structures in the cornified layer of the skin in the continuous shedding of cells from the skin surface. Specific for amino acid residues with aromatic side chains in the P1 position. Cleaves insulin A chain at '14-Tyr-|-Gln-15' and insulin B chain at '6-Leu-|-Cys-7', '16-Tyr-|-Leu-17', '25-Phe-|-Tyr-26' and '26-Tyr-|-Thr-27'. Could play a role in the activation of precursors to inflammatory cytokines. The chain is Kallikrein-7 (KLK7) from Homo sapiens (Human).